Consider the following 706-residue polypeptide: Ribosomal RNA large subunit methyltransferase K/L (706 aa).

In terms of domain architecture, THUMP spans 43–154; that stretch reads LMYQSLLWSR…RDMASVALDL (112 aa).

The protein belongs to the methyltransferase superfamily. RlmKL family.

Its subcellular location is the cytoplasm. The enzyme catalyses guanosine(2445) in 23S rRNA + S-adenosyl-L-methionine = N(2)-methylguanosine(2445) in 23S rRNA + S-adenosyl-L-homocysteine + H(+). It catalyses the reaction guanosine(2069) in 23S rRNA + S-adenosyl-L-methionine = N(2)-methylguanosine(2069) in 23S rRNA + S-adenosyl-L-homocysteine + H(+). In terms of biological role, specifically methylates the guanine in position 2445 (m2G2445) and the guanine in position 2069 (m7G2069) of 23S rRNA. The protein is Ribosomal RNA large subunit methyltransferase K/L of Yersinia pestis (strain Pestoides F).